We begin with the raw amino-acid sequence, 417 residues long: Serine hydroxymethyltransferase (417 aa).

Residues Leu121 and 125–127 each bind (6S)-5,6,7,8-tetrahydrofolate; that span reads GHL. Lys230 is subject to N6-(pyridoxal phosphate)lysine. (6S)-5,6,7,8-tetrahydrofolate is bound at residue 355 to 357; it reads SPF.

It belongs to the SHMT family. Homodimer. It depends on pyridoxal 5'-phosphate as a cofactor.

It is found in the cytoplasm. The catalysed reaction is (6R)-5,10-methylene-5,6,7,8-tetrahydrofolate + glycine + H2O = (6S)-5,6,7,8-tetrahydrofolate + L-serine. The protein operates within one-carbon metabolism; tetrahydrofolate interconversion. It functions in the pathway amino-acid biosynthesis; glycine biosynthesis; glycine from L-serine: step 1/1. In terms of biological role, catalyzes the reversible interconversion of serine and glycine with tetrahydrofolate (THF) serving as the one-carbon carrier. This reaction serves as the major source of one-carbon groups required for the biosynthesis of purines, thymidylate, methionine, and other important biomolecules. Also exhibits THF-independent aldolase activity toward beta-hydroxyamino acids, producing glycine and aldehydes, via a retro-aldol mechanism. The sequence is that of Serine hydroxymethyltransferase from Marinobacter nauticus (strain ATCC 700491 / DSM 11845 / VT8) (Marinobacter aquaeolei).